An 806-amino-acid polypeptide reads, in one-letter code: Phenylalanine--tRNA ligase beta subunit (806 aa).

One can recognise a tRNA-binding domain in the interval 44 to 158 (ADGLSKLVVG…EEAVPGDAIF (115 aa)). The 76-residue stretch at 411-486 (TEPVEVSTSL…RIYGYDKLPT (76 aa)) folds into the B5 domain. Mg(2+)-binding residues include D464, D470, E473, and E474. Residues 713–806 (TKFPAMTRDV…LTEQVGAEVR (94 aa)) enclose the FDX-ACB domain.

It belongs to the phenylalanyl-tRNA synthetase beta subunit family. Type 1 subfamily. In terms of assembly, tetramer of two alpha and two beta subunits. It depends on Mg(2+) as a cofactor.

Its subcellular location is the cytoplasm. It carries out the reaction tRNA(Phe) + L-phenylalanine + ATP = L-phenylalanyl-tRNA(Phe) + AMP + diphosphate + H(+). This Streptococcus pyogenes serotype M28 (strain MGAS6180) protein is Phenylalanine--tRNA ligase beta subunit.